Here is a 735-residue protein sequence, read N- to C-terminus: Protein RETICULATA-RELATED 5, chloroplastic (735 aa).

The N-terminal 75 residues, 1 to 75 (MKPTTNGGLL…TRRAILVAPP (75 aa)), are a transit peptide targeting the chloroplast. The next 2 membrane-spanning stretches (helical) occupy residues 519–539 (ASVVDFFTVWLPAPTLSFISY) and 582–602 (VIIGGLKLAGVGVVSSFAAVG). Residues 714–726 (ASQSTVEYSTTEE) show a composition bias toward polar residues. Positions 714 to 735 (ASQSTVEYSTTEEASMDDLKNQ) are disordered.

It belongs to the RETICULATA family.

The protein resides in the plastid. It localises to the chloroplast membrane. In terms of biological role, may play a role in leaf development. The protein is Protein RETICULATA-RELATED 5, chloroplastic of Arabidopsis thaliana (Mouse-ear cress).